Consider the following 690-residue polypeptide: UvrABC system protein B (690 aa).

The region spanning 39-422 (EGLDDGLSFQ…EQQHAGQVVE (384 aa)) is the Helicase ATP-binding domain. 52-59 (GVTGSGKT) is an ATP binding site. The Beta-hairpin motif lies at 105–128 (YYDYYQPEAYVPSRDLFIEKDSSI). The Helicase C-terminal domain maps to 443–596 (QVDDLLAEIG…QIAFNLEHGI (154 aa)). The region spanning 640 to 675 (AREIKRLEKSMMECAKNLEFEKAAAARDDLFRLRER) is the UVR domain.

It belongs to the UvrB family. In terms of assembly, forms a heterotetramer with UvrA during the search for lesions. Interacts with UvrC in an incision complex.

The protein resides in the cytoplasm. Its function is as follows. The UvrABC repair system catalyzes the recognition and processing of DNA lesions. A damage recognition complex composed of 2 UvrA and 2 UvrB subunits scans DNA for abnormalities. Upon binding of the UvrA(2)B(2) complex to a putative damaged site, the DNA wraps around one UvrB monomer. DNA wrap is dependent on ATP binding by UvrB and probably causes local melting of the DNA helix, facilitating insertion of UvrB beta-hairpin between the DNA strands. Then UvrB probes one DNA strand for the presence of a lesion. If a lesion is found the UvrA subunits dissociate and the UvrB-DNA preincision complex is formed. This complex is subsequently bound by UvrC and the second UvrB is released. If no lesion is found, the DNA wraps around the other UvrB subunit that will check the other stand for damage. The protein is UvrABC system protein B of Dechloromonas aromatica (strain RCB).